We begin with the raw amino-acid sequence, 561 residues long: Oxygen-dependent choline dehydrogenase (561 aa).

7-36 (DYIIVGAGSAGNVLASRLTEDADVTVLLLE) is a binding site for FAD. Histidine 474 (proton acceptor) is an active-site residue.

This sequence belongs to the GMC oxidoreductase family. FAD serves as cofactor.

It catalyses the reaction choline + A = betaine aldehyde + AH2. The enzyme catalyses betaine aldehyde + NAD(+) + H2O = glycine betaine + NADH + 2 H(+). The protein operates within amine and polyamine biosynthesis; betaine biosynthesis via choline pathway; betaine aldehyde from choline (cytochrome c reductase route): step 1/1. Involved in the biosynthesis of the osmoprotectant glycine betaine. Catalyzes the oxidation of choline to betaine aldehyde and betaine aldehyde to glycine betaine at the same rate. This chain is Oxygen-dependent choline dehydrogenase, found in Paraburkholderia phytofirmans (strain DSM 17436 / LMG 22146 / PsJN) (Burkholderia phytofirmans).